We begin with the raw amino-acid sequence, 360 residues long: NAD(P)H-quinone oxidoreductase subunit 1, chloroplastic (360 aa).

Transmembrane regions (helical) follow at residues 27-47 (IWIF…VLVI), 98-118 (FSIG…VIPF), 129-149 (IGIF…LMSG), 165-185 (AAQS…ISLL), 203-223 (FWGW…ISSL), 248-268 (YSGI…LISS), 269-289 (LFVT…ISIL), 297-317 (IFGT…FLFI), and 340-360 (FLLP…LFSL).

It belongs to the complex I subunit 1 family. In terms of assembly, NDH is composed of at least 16 different subunits, 5 of which are encoded in the nucleus.

It is found in the plastid. Its subcellular location is the chloroplast thylakoid membrane. It carries out the reaction a plastoquinone + NADH + (n+1) H(+)(in) = a plastoquinol + NAD(+) + n H(+)(out). It catalyses the reaction a plastoquinone + NADPH + (n+1) H(+)(in) = a plastoquinol + NADP(+) + n H(+)(out). NDH shuttles electrons from NAD(P)H:plastoquinone, via FMN and iron-sulfur (Fe-S) centers, to quinones in the photosynthetic chain and possibly in a chloroplast respiratory chain. The immediate electron acceptor for the enzyme in this species is believed to be plastoquinone. Couples the redox reaction to proton translocation, and thus conserves the redox energy in a proton gradient. This Barbarea verna (Land cress) protein is NAD(P)H-quinone oxidoreductase subunit 1, chloroplastic.